The sequence spans 243 residues: Probable 2-phosphosulfolactate phosphatase (243 aa).

This sequence belongs to the ComB family. Requires Mg(2+) as cofactor.

The catalysed reaction is (2R)-O-phospho-3-sulfolactate + H2O = (2R)-3-sulfolactate + phosphate. This chain is Probable 2-phosphosulfolactate phosphatase, found in Prochlorococcus marinus (strain MIT 9313).